Here is a 478-residue protein sequence, read N- to C-terminus: MAKDKKFVEDITPMDEDFAQWYTDIVKKAELADYSSIRGCMIIRPNGYAIWENIQKYVDTKLKEYGHENVSMPIFIPENLLQKEKDHVEGFAPEVAWVTHGGDDELAERLCVRPTSETLFCEHYAKIVQSYKDLPKLYNQWCSVVRWEKTTRPFLRTTEFLWQEGHTIHETKEEAESHSLKILNMYSRLCEDMLAMPVVMGKKTDKEKFAGADDTYTIESLMHDGKALQAGTSHYLGQNFSKAFAIQFSDRNGKLDYPHYTTWAVTTRLIGAIIMVHGDNSGLKLPPRIAPTQAVIIPVAQHKEGVLEKAEELKERLAKVVRVKLDDSDKMPGWKYSEYEMKGIPLRIEIGPKDIEKNQAVLVRRDNREKTIVSLDEIEIKVQEMLDIIHNSMLEEAKKTRDEKTYVATNMEEFEDTIENKPGFIKAMWCGDRACEDKIREVTGATSRCMPFEQEVVSDTCVCCGKKAKNLVYWGRAY.

The protein belongs to the class-II aminoacyl-tRNA synthetase family. ProS type 3 subfamily. Homodimer.

Its subcellular location is the cytoplasm. The catalysed reaction is tRNA(Pro) + L-proline + ATP = L-prolyl-tRNA(Pro) + AMP + diphosphate. In terms of biological role, catalyzes the attachment of proline to tRNA(Pro) in a two-step reaction: proline is first activated by ATP to form Pro-AMP and then transferred to the acceptor end of tRNA(Pro). This Clostridium botulinum (strain Langeland / NCTC 10281 / Type F) protein is Proline--tRNA ligase.